Reading from the N-terminus, the 230-residue chain is Inactive 2-(S)-hydroxypropyl-CoM dehydrogenase 2 (230 aa).

Belongs to the short-chain dehydrogenases/reductases (SDR) family.

This chain is Inactive 2-(S)-hydroxypropyl-CoM dehydrogenase 2, found in Xanthobacter autotrophicus (strain ATCC BAA-1158 / Py2).